A 348-amino-acid chain; its full sequence is Ribonuclease H (348 aa).

A compositionally biased stretch (polar residues) spans 54-65; that stretch reads NTTSNYGSSTHA. The interval 54 to 81 is disordered; that stretch reads NTTSNYGSSTHAGGQVSKPHTTQKRVHR. Residues 184–346 enclose the RNase H type-1 domain; it reads YNKSMNVYCD…ADFLAKKGAS (163 aa). The Mg(2+) site is built by Asp-193, Glu-235, Asp-264, and Asp-338.

This sequence belongs to the RNase H family. Mg(2+) serves as cofactor.

The catalysed reaction is Endonucleolytic cleavage to 5'-phosphomonoester.. In terms of biological role, endonuclease that specifically degrades the RNA of RNA-DNA hybrids. This is Ribonuclease H (RNH1) from Saccharomyces cerevisiae (strain ATCC 204508 / S288c) (Baker's yeast).